The sequence spans 437 residues: Cytochrome b (437 aa).

Residues 45–65 traverse the membrane as a helical segment; the sequence is WIWGIVLAFTLVLQIVTGIVL. Heme b-binding residues include His-97 and His-111. Transmembrane regions (helical) follow at residues 100–120, 129–149, 156–176, 194–214, 248–268, 298–318, 330–350, 365–385, and 391–411; these read GASL…YYGS, WIVG…GYVL, FWGA…GPSI, FFSL…IHIW, FVIK…AVVA, FLPF…VILV, FFGV…PWLD, MWFW…AMPT, and WISL…LPLL. Residues His-198 and His-212 each coordinate heme b.

This sequence belongs to the cytochrome b family. As to quaternary structure, the main subunits of complex b-c1 are: cytochrome b, cytochrome c1 and the Rieske protein. Requires heme b as cofactor.

It is found in the cell membrane. In terms of biological role, component of the ubiquinol-cytochrome c reductase complex (complex III or cytochrome b-c1 complex), which is a respiratory chain that generates an electrochemical potential coupled to ATP synthesis. The chain is Cytochrome b (petB) from Rhodobacter capsulatus (strain ATCC BAA-309 / NBRC 16581 / SB1003).